A 147-amino-acid polypeptide reads, in one-letter code: Transthyretin (147 aa).

The first 20 residues, 1-20 (MASFRLFLLCLAGLVFVSEA), serve as a signal peptide directing secretion. C30 bears the Sulfocysteine mark. Residue K35 coordinates L-thyroxine. E62 carries the 4-carboxyglutamate modification. The residue at position 72 (S72) is a Phosphoserine. E74 is an L-thyroxine binding site. The N-linked (GlcNAc...) asparagine glycan is linked to N118. S137 is an L-thyroxine binding site.

Belongs to the transthyretin family. In terms of assembly, homotetramer. Dimer of dimers. In the homotetramer, subunits assemble around a central channel that can accommodate two ligand molecules. Interacts with RBP4. Post-translationally, sulfonation of the reactive cysteine Cys-30 enhances the stability of the native conformation of TTR, avoiding misassembly of the protein leading to amyloid formation. Detected in serum (at protein level).

Its subcellular location is the secreted. In terms of biological role, thyroid hormone-binding protein. Probably transports thyroxine from the bloodstream to the brain. The chain is Transthyretin (TTR) from Bos taurus (Bovine).